A 172-amino-acid polypeptide reads, in one-letter code: MNLLDYLPGVPDFPKPGILFRDISPLLANPAAFKETIAQLDALAKTFDYTHILGIESRGFIFGSALAHHAHKGFAIARKPNKLPLASHREQYGLEYGSDSLEIQQSTLPTNAKVLLIDDVLATGGTLIAADKLLRSAGFQVSGAITLLEIAVLNGSEQLEKNHIHHKSVLRS.

This sequence belongs to the purine/pyrimidine phosphoribosyltransferase family. Homodimer.

The protein localises to the cytoplasm. The catalysed reaction is AMP + diphosphate = 5-phospho-alpha-D-ribose 1-diphosphate + adenine. Its pathway is purine metabolism; AMP biosynthesis via salvage pathway; AMP from adenine: step 1/1. Functionally, catalyzes a salvage reaction resulting in the formation of AMP, that is energically less costly than de novo synthesis. This chain is Adenine phosphoribosyltransferase, found in Polynucleobacter asymbioticus (strain DSM 18221 / CIP 109841 / QLW-P1DMWA-1) (Polynucleobacter necessarius subsp. asymbioticus).